The primary structure comprises 422 residues: Tyrosine--tRNA ligase (422 aa).

Tyr37 contributes to the L-tyrosine binding site. A 'HIGH' region motif is present at residues 42-51; that stretch reads PTEESLHIGH. Tyr175 and Gln179 together coordinate L-tyrosine. Residues 235-239 carry the 'KMSKS' region motif; sequence KFGKT. Lys238 lines the ATP pocket. One can recognise an S4 RNA-binding domain in the interval 357–414; that stretch reads KDLQEALVLTSLAQSRTQAKNMIISNSISINTEKIRKNHIFHEKDKLFGKFTLLSRGK.

This sequence belongs to the class-I aminoacyl-tRNA synthetase family. TyrS type 1 subfamily. In terms of assembly, homodimer.

It is found in the cytoplasm. It catalyses the reaction tRNA(Tyr) + L-tyrosine + ATP = L-tyrosyl-tRNA(Tyr) + AMP + diphosphate + H(+). In terms of biological role, catalyzes the attachment of tyrosine to tRNA(Tyr) in a two-step reaction: tyrosine is first activated by ATP to form Tyr-AMP and then transferred to the acceptor end of tRNA(Tyr). This Buchnera aphidicola subsp. Acyrthosiphon pisum (strain 5A) protein is Tyrosine--tRNA ligase.